The following is a 520-amino-acid chain: Probable methylmalonate-semialdehyde/malonate-semialdehyde dehydrogenase [acylating], mitochondrial (520 aa).

Residues A169, F171, K195, E198, R199, and S248 each coordinate NAD(+). The active-site Nucleophile is C303. E403 lines the NAD(+) pocket.

Belongs to the aldehyde dehydrogenase family. Homotetramer.

Its subcellular location is the mitochondrion. The catalysed reaction is 2-methyl-3-oxopropanoate + NAD(+) + CoA + H2O = propanoyl-CoA + hydrogencarbonate + NADH + H(+). The enzyme catalyses 3-oxopropanoate + NAD(+) + CoA + H2O = hydrogencarbonate + acetyl-CoA + NADH + H(+). In terms of biological role, probable malonate and methylmalonate semialdehyde dehydrogenase involved in the catabolism of valine, thymine, and compounds catabolized by way of beta-alanine, including uracil and cytidine. This is Probable methylmalonate-semialdehyde/malonate-semialdehyde dehydrogenase [acylating], mitochondrial from Drosophila melanogaster (Fruit fly).